Here is a 2364-residue protein sequence, read N- to C-terminus: Actin-binding protein F (2364 aa).

Positions 138 to 157 (THQTSPTTETTTTPSSSSSS) are enriched in low complexity. 4 disordered regions span residues 138–168 (THQT…STLD), 1087–1111 (QASK…EKRR), 1412–1435 (NNNS…RAPM), and 1929–2088 (KLIS…SEFN). Basic and acidic residues predominate over residues 1092–1111 (NESEVKDEKSMRNRQVEKRR). 2 stretches are compositionally biased toward low complexity: residues 1412–1428 (NNNS…NSFG) and 1932–1960 (SSST…TTTD). Residues 1960-2017 (DSSKDKKKLEKEEKQREKERKQKEKEDKKREKEELKKKEKEEKKKKEEEKKLKKKSGS) are a coiled coil. A compositionally biased stretch (basic and acidic residues) spans 1961–2010 (SSKDKKKLEKEEKQREKERKQKEKEDKKREKEELKKKEKEEKKKKEEEKK). The segment covering 2027-2047 (ATPTTTTTTEATTTTTTTTAT) has biased composition (low complexity). A compositionally biased stretch (basic and acidic residues) spans 2052-2070 (IKPEKIASDDEHDDHHHDE). Over residues 2071 to 2081 (HDEEDDDDEPL) the composition is skewed to acidic residues. The stretch at 2129–2173 (VQRWNSLFKDLRNKVDQVSNKDSVEIDYEKEIDRERRQNKMASNE) forms a coiled coil.

Interacts with actin.

Its subcellular location is the nucleus. The protein localises to the cytoplasm. It is found in the cytoskeleton. The chain is Actin-binding protein F (abpF) from Dictyostelium discoideum (Social amoeba).